We begin with the raw amino-acid sequence, 611 residues long: tRNA uridine 5-carboxymethylaminomethyl modification enzyme MnmG (611 aa).

Residues 8–13, Val120, and Ser175 contribute to the FAD site; that span reads GAGHAG. Position 268–282 (268–282) interacts with NAD(+); that stretch reads GPRYCPSIEDKIVRF. Gln365 provides a ligand contact to FAD.

This sequence belongs to the MnmG family. Homodimer. Heterotetramer of two MnmE and two MnmG subunits. Requires FAD as cofactor.

It localises to the cytoplasm. NAD-binding protein involved in the addition of a carboxymethylaminomethyl (cmnm) group at the wobble position (U34) of certain tRNAs, forming tRNA-cmnm(5)s(2)U34. In Mycoplasmoides gallisepticum (strain R(low / passage 15 / clone 2)) (Mycoplasma gallisepticum), this protein is tRNA uridine 5-carboxymethylaminomethyl modification enzyme MnmG.